The primary structure comprises 332 residues: Biotin synthase (332 aa).

The region spanning 53-282 (HFGKKVKLNM…TKEIRISGGR (230 aa)) is the Radical SAM core domain. The [4Fe-4S] cluster site is built by C71, C75, and C78. The [2Fe-2S] cluster site is built by C115, C147, C207, and R277.

The protein belongs to the radical SAM superfamily. Biotin synthase family. As to quaternary structure, homodimer. [4Fe-4S] cluster serves as cofactor. The cofactor is [2Fe-2S] cluster.

It carries out the reaction (4R,5S)-dethiobiotin + (sulfur carrier)-SH + 2 reduced [2Fe-2S]-[ferredoxin] + 2 S-adenosyl-L-methionine = (sulfur carrier)-H + biotin + 2 5'-deoxyadenosine + 2 L-methionine + 2 oxidized [2Fe-2S]-[ferredoxin]. It participates in cofactor biosynthesis; biotin biosynthesis; biotin from 7,8-diaminononanoate: step 2/2. In terms of biological role, catalyzes the conversion of dethiobiotin (DTB) to biotin by the insertion of a sulfur atom into dethiobiotin via a radical-based mechanism. The sequence is that of Biotin synthase from Bacillus cereus (strain AH187).